Here is a 163-residue protein sequence, read N- to C-terminus: UPF0416 protein RBE_1121 (163 aa).

The protein belongs to the UPF0416 family.

This Rickettsia bellii (strain RML369-C) protein is UPF0416 protein RBE_1121.